Reading from the N-terminus, the 143-residue chain is Interferon gamma (143 aa).

The residue at position 1 (Gln1) is a Pyrrolidone carboxylic acid. Residues Asn25 and Asn97 are each glycosylated (N-linked (GlcNAc...) asparagine).

Belongs to the type II (or gamma) interferon family. In terms of assembly, homodimer. Interacts with IFNGR1 (via extracellular domain); this interaction promotes IFNGR1 dimerization.

The protein resides in the secreted. Its function is as follows. Type II interferon produced by immune cells such as T-cells and NK cells that plays crucial roles in antimicrobial, antiviral, and antitumor responses by activating effector immune cells and enhancing antigen presentation. Primarily signals through the JAK-STAT pathway after interaction with its receptor IFNGR1 to affect gene regulation. Upon IFNG binding, IFNGR1 intracellular domain opens out to allow association of downstream signaling components JAK2, JAK1 and STAT1, leading to STAT1 activation, nuclear translocation and transcription of IFNG-regulated genes. Many of the induced genes are transcription factors such as IRF1 that are able to further drive regulation of a next wave of transcription. Plays a role in class I antigen presentation pathway by inducing a replacement of catalytic proteasome subunits with immunoproteasome subunits. In turn, increases the quantity, quality, and repertoire of peptides for class I MHC loading. Increases the efficiency of peptide generation also by inducing the expression of activator PA28 that associates with the proteasome and alters its proteolytic cleavage preference. Up-regulates as well MHC II complexes on the cell surface by promoting expression of several key molecules such as cathepsins B/CTSB, H/CTSH, and L/CTSL. Participates in the regulation of hematopoietic stem cells during development and under homeostatic conditions by affecting their development, quiescence, and differentiation. The chain is Interferon gamma (IFNG) from Pan troglodytes (Chimpanzee).